The chain runs to 336 residues: Eukaryotic translation initiation factor 3 subunit H (336 aa).

The MPN domain maps to 21-154 (VQCDGLAAMK…LKAYRLTPQA (134 aa)).

Belongs to the eIF-3 subunit H family. Component of the eukaryotic translation initiation factor 3 (eIF-3) complex.

It localises to the cytoplasm. Its function is as follows. Component of the eukaryotic translation initiation factor 3 (eIF-3) complex, which is involved in protein synthesis of a specialized repertoire of mRNAs and, together with other initiation factors, stimulates binding of mRNA and methionyl-tRNAi to the 40S ribosome. The eIF-3 complex specifically targets and initiates translation of a subset of mRNAs involved in cell proliferation. The sequence is that of Eukaryotic translation initiation factor 3 subunit H from Aedes aegypti (Yellowfever mosquito).